The sequence spans 141 residues: MPSQPSRELERFSNPHPERDYVVHMDLPEFTCLCPLTGQPDFAHFMLDFIPDQHNVELKSLKLYLWSFRDEGAFHEAMTNRIADDLIGLINPRYLRLLGRWYVRGGITTDVLIEHRQPGWQNPDILGQLPTVRWAQHQPGH.

Cysteine 34 acts as the Thioimide intermediate in catalysis. Aspartate 41 serves as the catalytic Proton donor. Residues 56-58 (VEL) and 75-76 (HE) contribute to the substrate site.

Belongs to the GTP cyclohydrolase I family. QueF type 1 subfamily.

Its subcellular location is the cytoplasm. The catalysed reaction is 7-aminomethyl-7-carbaguanine + 2 NADP(+) = 7-cyano-7-deazaguanine + 2 NADPH + 3 H(+). It participates in tRNA modification; tRNA-queuosine biosynthesis. Functionally, catalyzes the NADPH-dependent reduction of 7-cyano-7-deazaguanine (preQ0) to 7-aminomethyl-7-deazaguanine (preQ1). This chain is NADPH-dependent 7-cyano-7-deazaguanine reductase, found in Acidithiobacillus ferrooxidans (strain ATCC 23270 / DSM 14882 / CIP 104768 / NCIMB 8455) (Ferrobacillus ferrooxidans (strain ATCC 23270)).